Consider the following 107-residue polypeptide: MMNFATRSVLRGSIKVNRLYTASASSSSSTRIPSGFASATSSKSNSSTKSSPSPINSFNNKTNNIFKSNATNNSSLAFGIVEFMVFNGMISTITTTTFNNNNNNNNK.

Residues 23-64 (SASSSSSTRIPSGFASATSSKSNSSTKSSPSPINSFNNKTNN) form a disordered region. The span at 37-57 (ASATSSKSNSSTKSSPSPINS) shows a compositional bias: low complexity. A helical membrane pass occupies residues 76-98 (LAFGIVEFMVFNGMISTITTTTF).

The protein localises to the membrane. This is an uncharacterized protein from Dictyostelium discoideum (Social amoeba).